Here is a 196-residue protein sequence, read N- to C-terminus: FAD-linked sulfhydryl oxidase ERV2 (196 aa).

At 1–12 (MKQIVKRSHAIR) the chain is on the cytoplasmic side. The chain crosses the membrane as a helical; Signal-anchor span at residues 13–35 (IVAALGIIGLWMFFSSNELSIAT). Residues 36–196 (PGLIKAKSGI…SLEKEAKQHG (161 aa)) are Lumenal-facing. The region spanning 72–174 (MGDDKVKKEV…YDCATILEDY (103 aa)) is the ERV/ALR sulfhydryl oxidase domain. Lysine 78, arginine 83, and tryptophan 86 together coordinate FAD. Cysteine 121 and cysteine 124 form a disulfide bridge. FAD contacts are provided by histidine 127, cysteine 150, histidine 153, asparagine 157, lysine 162, and tyrosine 174. Cysteine 150 and cysteine 167 are oxidised to a cystine. The cysteines at positions 176 and 178 are disulfide-linked.

In terms of assembly, homodimer. Interacts with the substrate protein PDI1, forming transient intermolecular disulfide bridges. FAD serves as cofactor.

Its subcellular location is the endoplasmic reticulum membrane. The enzyme catalyses 2 R'C(R)SH + O2 = R'C(R)S-S(R)CR' + H2O2. FAD-dependent sulfhydryl oxidase that catalyzes disulfide bond formation in the endoplasmic reticulum lumen in parallel to ERO1. In Saccharomyces cerevisiae (strain ATCC 204508 / S288c) (Baker's yeast), this protein is FAD-linked sulfhydryl oxidase ERV2 (ERV2).